We begin with the raw amino-acid sequence, 123 residues long: Small ribosomal subunit protein uS12 (123 aa).

The interval 1-32 (MPTINQLVRHGRKRSVKKTNTPALKASPQKRG) is disordered. 3-methylthioaspartic acid is present on Asp-89.

The protein belongs to the universal ribosomal protein uS12 family. As to quaternary structure, part of the 30S ribosomal subunit. Contacts proteins S8 and S17. May interact with IF1 in the 30S initiation complex.

In terms of biological role, with S4 and S5 plays an important role in translational accuracy. Its function is as follows. Interacts with and stabilizes bases of the 16S rRNA that are involved in tRNA selection in the A site and with the mRNA backbone. Located at the interface of the 30S and 50S subunits, it traverses the body of the 30S subunit contacting proteins on the other side and probably holding the rRNA structure together. The combined cluster of proteins S8, S12 and S17 appears to hold together the shoulder and platform of the 30S subunit. The protein is Small ribosomal subunit protein uS12 of Desulfatibacillum aliphaticivorans.